The chain runs to 413 residues: MSAVKVQLVPWTEKYRPARIADVVGNEEAKKKYVAWINSWVKGKPSKKAALLYGPPGSGKTSIVHATAKEFSWELIELNASDVRTREALQQRLLGALNTRSVLGYSGKIILLDEVDGISTKEDAGGLQAIVELIEKSNWPIVLTANDPWDPKLRPLRDLCELIEFKKIGKRDIMKVLENICSKEGVECSREVLSAIADNAKGDLRAAINDLQSLAMGKKTISLADLQILGDRAEQETIFDIVRSVLTAKYPEQALAVTRLPSLDYEMLMQWLSENIVYQYEPSLQAIADAYDALSWADIMLTRMKREQQWALLSYALELMTAGVASARERPPFKFVKYSFPEKLRILARSKEKREKFVRAVRGAAAKIHVSTSKFRTDVLPYLRVIYEHDKKRALEILRNLGVPEDALELATQ.

Position 54–61 (54–61 (GPPGSGKT)) interacts with ATP.

It belongs to the activator 1 small subunits family. RfcL subfamily. Heteromultimer composed of small subunits (RfcS) and large subunits (RfcL).

Its function is as follows. Part of the RFC clamp loader complex which loads the PCNA sliding clamp onto DNA. The polypeptide is Replication factor C large subunit (Thermofilum pendens (strain DSM 2475 / Hrk 5)).